Reading from the N-terminus, the 643-residue chain is 1-deoxy-D-xylulose-5-phosphate synthase (643 aa).

Residues H78 and 119–121 (AHS) each bind thiamine diphosphate. Position 150 (D150) interacts with Mg(2+). Residues 151–152 (GS), N179, Y288, and E370 contribute to the thiamine diphosphate site. Residue N179 coordinates Mg(2+).

The protein belongs to the transketolase family. DXPS subfamily. In terms of assembly, homodimer. Requires Mg(2+) as cofactor. The cofactor is thiamine diphosphate.

The catalysed reaction is D-glyceraldehyde 3-phosphate + pyruvate + H(+) = 1-deoxy-D-xylulose 5-phosphate + CO2. The protein operates within metabolic intermediate biosynthesis; 1-deoxy-D-xylulose 5-phosphate biosynthesis; 1-deoxy-D-xylulose 5-phosphate from D-glyceraldehyde 3-phosphate and pyruvate: step 1/1. In terms of biological role, catalyzes the acyloin condensation reaction between C atoms 2 and 3 of pyruvate and glyceraldehyde 3-phosphate to yield 1-deoxy-D-xylulose-5-phosphate (DXP). The sequence is that of 1-deoxy-D-xylulose-5-phosphate synthase from Brucella canis (strain ATCC 23365 / NCTC 10854 / RM-666).